The primary structure comprises 546 residues: Thermolysin (546 aa).

An N-terminal signal peptide occupies residues 1–25 (MDKRAMLGAIGLAFGLMAWPFGASA). The propeptide at 26 to 228 (KEKSMVWNEQ…EAKPGGGQPV (203 aa)) is activation peptide. Asp287, Asp289, Gln291, and Asp368 together coordinate Ca(2+). Zn(2+) is bound at residue His372. Glu373 is a catalytic residue. The Zn(2+) site is built by His376 and Glu396. Residues Asn413, Asp415, Glu417, Glu420, Tyr423, Thr424, Ile427, and Asp430 each contribute to the Ca(2+) site. The active-site Proton donor is His461.

Belongs to the peptidase M4 family. Ca(2+) serves as cofactor. It depends on Zn(2+) as a cofactor.

The protein resides in the secreted. It catalyses the reaction Preferential cleavage: Xaa-|-Leu &gt; Xaa-|-Phe.. Extracellular zinc metalloprotease. Has collagenase activity. The polypeptide is Thermolysin (npr) (Bacillus sp. (strain EA1)).